Reading from the N-terminus, the 198-residue chain is Recombination protein RecR (198 aa).

A C4-type zinc finger spans residues 56–71 (CTTCGNIDTHDPCAIC). The Toprim domain maps to 79-174 (RSLCVVEEVS…RLTQLAHGLP (96 aa)).

Belongs to the RecR family.

In terms of biological role, may play a role in DNA repair. It seems to be involved in an RecBC-independent recombinational process of DNA repair. It may act with RecF and RecO. This Sphingopyxis alaskensis (strain DSM 13593 / LMG 18877 / RB2256) (Sphingomonas alaskensis) protein is Recombination protein RecR.